The chain runs to 236 residues: N-alpha-acetyltransferase 40 (236 aa).

Residue Gly-2 is the site of N-myristoyl glycine attachment. The N-acetyltransferase domain occupies 63 to 217 (SDLDQKTIDW…DCTYEILSKR (155 aa)). Substrate is bound by residues Tyr-85, 127-129 (DVE), and Tyr-138. Acetyl-CoA contacts are provided by residues 140–142 (VQL) and 148–153 (RKGVGK). Thr-174 contributes to the substrate binding site. Asn-179 is a binding site for acetyl-CoA. Residue Tyr-211 coordinates substrate.

This sequence belongs to the acetyltransferase family. NAA40 subfamily.

The protein resides in the cytoplasm. It is found in the nucleus. The catalysed reaction is N-terminal L-seryl-[histone H4] + acetyl-CoA = N-terminal N(alpha)-acetyl-L-seryl-[histone H4] + CoA + H(+). The enzyme catalyses N-terminal L-seryl-[histone H2A] + acetyl-CoA = N-terminal N(alpha)-acetyl-L-seryl-[histone H2A] + CoA + H(+). Its function is as follows. N-alpha-acetyltransferase that specifically mediates the acetylation of the N-terminal residues of histones H4 and H2A. In contrast to other N-alpha-acetyltransferase, has a very specific selectivity for histones H4 and H2A N-terminus and specifically recognizes the 'Ser-Gly-Arg-Gly sequence'. The polypeptide is N-alpha-acetyltransferase 40 (naa40) (Xenopus laevis (African clawed frog)).